We begin with the raw amino-acid sequence, 548 residues long: Chaperonin GroEL 1 (548 aa).

ATP-binding positions include 30–33 (TLGP), lysine 51, 87–91 (DGTTT), glycine 415, 479–481 (NAA), and aspartate 495.

The protein belongs to the chaperonin (HSP60) family. As to quaternary structure, forms a cylinder of 14 subunits composed of two heptameric rings stacked back-to-back. Interacts with the co-chaperonin GroES.

Its subcellular location is the cytoplasm. The enzyme catalyses ATP + H2O + a folded polypeptide = ADP + phosphate + an unfolded polypeptide.. Together with its co-chaperonin GroES, plays an essential role in assisting protein folding. The GroEL-GroES system forms a nano-cage that allows encapsulation of the non-native substrate proteins and provides a physical environment optimized to promote and accelerate protein folding. The sequence is that of Chaperonin GroEL 1 from Vibrio harveyi (Beneckea harveyi).